Reading from the N-terminus, the 93-residue chain is Large ribosomal subunit protein uL23 (93 aa).

The protein belongs to the universal ribosomal protein uL23 family. As to quaternary structure, part of the 50S ribosomal subunit. Contacts protein L29, and trigger factor when it is bound to the ribosome.

Its function is as follows. One of the early assembly proteins it binds 23S rRNA. One of the proteins that surrounds the polypeptide exit tunnel on the outside of the ribosome. Forms the main docking site for trigger factor binding to the ribosome. In Campylobacter jejuni subsp. doylei (strain ATCC BAA-1458 / RM4099 / 269.97), this protein is Large ribosomal subunit protein uL23.